The chain runs to 431 residues: MEDFNASLGPAVCRICMCGETSIPYLGQQAGEPLISPCKCSGTMGLFHRSCLEHWLTLTSTTNCEICKFAFKIKQKSRNFIDYIRQGGYKKLQSNRNPFIDFAFVLLILPFAFFGVFMSVEGALYAGRKYHYAFENRDNDENGNLEVRNQTSLECALFLFVALLLFSAFITLVVSALWHHFRQYKIWQAKNKIMFVVDQLDAEQSMHFNPQWKKQGGGWKEKIAKFWGEIRRRPTRAYIPEIARNDSIPIEPVVGISPVLVANFNRTSPDSNNTHHHDESRNEIPFGRRTPEQAICVSMSSTPQMYAEKLEKLTLSPIGLDDLFANSRATSTRRESGISPESSSRRDMRKTHSVYSVCSSFGTGVMSCSTPVADNNLRTLTPSPISLSTFKSGCPTEPVVAINLNDSGDTVTIDSQRGRFHVETLENDYNS.

The RING-CH-type zinc-finger motif lies at 5–74; sequence NASLGPAVCR…EICKFAFKIK (70 aa). Zn(2+) is bound by residues cysteine 13, cysteine 16, cysteine 38, cysteine 40, histidine 48, cysteine 51, cysteine 64, and cysteine 67. 2 helical membrane-spanning segments follow: residues 98–118 and 157–177; these read PFID…GVFM and LFLF…VSAL. 2 disordered regions span residues 267 to 289 and 327 to 349; these read TSPD…FGRR and SRAT…RDMR. Residues 273 to 282 show a composition bias toward basic and acidic residues; the sequence is NTHHHDESRN.

It localises to the cell membrane. The protein localises to the endosome membrane. It catalyses the reaction S-ubiquitinyl-[E2 ubiquitin-conjugating enzyme]-L-cysteine + [acceptor protein]-L-lysine = [E2 ubiquitin-conjugating enzyme]-L-cysteine + N(6)-ubiquitinyl-[acceptor protein]-L-lysine.. It participates in protein modification; protein ubiquitination. Functionally, E3 ubiquitin-protein ligase which positively regulates the fast polyspermy block during fertilization, preventing entry of more than one sperm into the oocyte. After fertilization, required in the zygote for the selective degradation of a subset of maternal membrane proteins including cav-1, chs-1 and rme-2, probably by mediating their K63-linked polyubiquitination. The chain is E3 ubiquitin-protein ligase marc-3 from Caenorhabditis elegans.